The primary structure comprises 376 residues: MKHNIIELAQNLIRRPSVSPDDQGCQQMIAQRLEKLGFTIEWMPFNNTLNLWAKHGCGAPVIAFAGHTDVVPTGDKSQWVYPPFEAEIVDDMLYGRGAADMKGSLAAMVVAAEEYVKANPNHAGTIAFLITSDEEAAAKDGTVRVVETLMARGEKIDFCMVGEPSSSKTLGDIVKNGRRGSVTGNLYIEGVLGHVAYPHLAENPVHKALPFLQELTAYQWDNGNEFFPPTSLQIANIQAGTGSNNVIPGELYVQFNLRYCTEVTDEFIKNTVAEMLKKHGLAYRIEWNLSGKPFLTEPGKLVDAVVDSLESVAGVKPKLDTGGGTSDGRFIALMGAEVVELGPLNATIHKVDERVSVTDLVTLGAVYNQMLVNLLD.

Residue His-67 participates in Zn(2+) binding. Asp-69 is a catalytic residue. Asp-100 is a binding site for Zn(2+). Glu-134 serves as the catalytic Proton acceptor. Positions 135, 163, and 349 each coordinate Zn(2+).

Belongs to the peptidase M20A family. DapE subfamily. As to quaternary structure, homodimer. Requires Zn(2+) as cofactor. Co(2+) serves as cofactor.

It carries out the reaction N-succinyl-(2S,6S)-2,6-diaminopimelate + H2O = (2S,6S)-2,6-diaminopimelate + succinate. Its pathway is amino-acid biosynthesis; L-lysine biosynthesis via DAP pathway; LL-2,6-diaminopimelate from (S)-tetrahydrodipicolinate (succinylase route): step 3/3. Its function is as follows. Catalyzes the hydrolysis of N-succinyl-L,L-diaminopimelic acid (SDAP), forming succinate and LL-2,6-diaminopimelate (DAP), an intermediate involved in the bacterial biosynthesis of lysine and meso-diaminopimelic acid, an essential component of bacterial cell walls. This chain is Succinyl-diaminopimelate desuccinylase, found in Actinobacillus succinogenes (strain ATCC 55618 / DSM 22257 / CCUG 43843 / 130Z).